The sequence spans 143 residues: Spore coat protein P (143 aa).

The sHSP domain occupies 34 to 143; sequence FFDSEASTFV…VETVAFNKGL (110 aa).

Belongs to the small heat shock protein (HSP20) family.

This chain is Spore coat protein P (cotP), found in Bacillus subtilis (strain 168).